We begin with the raw amino-acid sequence, 227 residues long: MNIKGSPWKGSLLLLLVSNLLLCQSVAPLPICPGGAARCQVTLRDLFDRAVVLSHYIHNLSSEMFSEFDKRYTHGRGFITKAINSCHTSSLATPEDKEQAQQMNQKDFLSLIVSILRSWNEPLYHLVTEVRGMQEAPEAILSKAVEIEEQTKRLLEGMELIVSQVHPETKENEIYPVWSGLPSLQMADEESRLSAYYNLLHCLRRDSHKIDNYLKLLKCRIIHNNNC.

An N-terminal signal peptide occupies residues 1–28 (MNIKGSPWKGSLLLLLVSNLLLCQSVAP). A disulfide bond links Cys32 and Cys39. Ser54 carries the phosphoserine modification. Residue Asn59 is glycosylated (N-linked (GlcNAc...) asparagine; partial). A phosphoserine mark is found at Ser62, Ser118, Ser163, and Ser194. Intrachain disulfides connect Cys86–Cys202 and Cys219–Cys227.

It belongs to the somatotropin/prolactin family. Interacts with PRLR.

The protein localises to the secreted. Prolactin acts primarily on the mammary gland by promoting lactation. This is Prolactin (PRL) from Homo sapiens (Human).